A 231-amino-acid polypeptide reads, in one-letter code: Protein RhiA (231 aa).

Its function is as follows. May be involved in plant-microbe interaction. This is Protein RhiA (rhiA) from Rhizobium leguminosarum bv. viciae.